Consider the following 616-residue polypeptide: Chaperone protein HscA (616 aa).

Belongs to the heat shock protein 70 family.

Its function is as follows. Chaperone involved in the maturation of iron-sulfur cluster-containing proteins. Has a low intrinsic ATPase activity which is markedly stimulated by HscB. Involved in the maturation of IscU. The sequence is that of Chaperone protein HscA from Salmonella paratyphi C (strain RKS4594).